Consider the following 307-residue polypeptide: Phospho-N-acetylmuramoyl-pentapeptide-transferase (307 aa).

10 helical membrane passes run 3 to 23 (IILF…KYWI), 47 to 67 (SGTP…FLFF), 71 to 91 (FFPS…DFKL), 105 to 125 (IFLS…DYKI), 137 to 157 (IFYV…INLT), 162 to 182 (GLAG…NFQF), 186 to 206 (LTLE…FNSH), 210 to 230 (IFMG…LSII), 237 to 257 (LVFL…QVFF), and 285 to 305 (VVWR…ILWN).

It belongs to the glycosyltransferase 4 family. MraY subfamily. The cofactor is Mg(2+).

The protein localises to the cell inner membrane. It catalyses the reaction UDP-N-acetyl-alpha-D-muramoyl-L-alanyl-gamma-D-glutamyl-meso-2,6-diaminopimeloyl-D-alanyl-D-alanine + di-trans,octa-cis-undecaprenyl phosphate = di-trans,octa-cis-undecaprenyl diphospho-N-acetyl-alpha-D-muramoyl-L-alanyl-D-glutamyl-meso-2,6-diaminopimeloyl-D-alanyl-D-alanine + UMP. The protein operates within cell wall biogenesis; peptidoglycan biosynthesis. Functionally, catalyzes the initial step of the lipid cycle reactions in the biosynthesis of the cell wall peptidoglycan: transfers peptidoglycan precursor phospho-MurNAc-pentapeptide from UDP-MurNAc-pentapeptide onto the lipid carrier undecaprenyl phosphate, yielding undecaprenyl-pyrophosphoryl-MurNAc-pentapeptide, known as lipid I. This chain is Phospho-N-acetylmuramoyl-pentapeptide-transferase, found in Dictyoglomus turgidum (strain DSM 6724 / Z-1310).